The chain runs to 226 residues: 3-dehydroquinate dehydratase (226 aa).

3-dehydroquinate-binding positions include 29 to 31 (EFR) and Arg56. His120 acts as the Proton donor/acceptor in catalysis. Lys146 functions as the Schiff-base intermediate with substrate in the catalytic mechanism. Residues Arg187, Thr208, and Gln212 each coordinate 3-dehydroquinate.

It belongs to the type-I 3-dehydroquinase family. Homodimer.

It catalyses the reaction 3-dehydroquinate = 3-dehydroshikimate + H2O. It functions in the pathway metabolic intermediate biosynthesis; chorismate biosynthesis; chorismate from D-erythrose 4-phosphate and phosphoenolpyruvate: step 3/7. Involved in the third step of the chorismate pathway, which leads to the biosynthesis of aromatic amino acids. Catalyzes the cis-dehydration of 3-dehydroquinate (DHQ) and introduces the first double bond of the aromatic ring to yield 3-dehydroshikimate. The sequence is that of 3-dehydroquinate dehydratase from Halobacterium salinarum (strain ATCC 700922 / JCM 11081 / NRC-1) (Halobacterium halobium).